Consider the following 484-residue polypeptide: NADH-quinone oxidoreductase subunit N (484 aa).

Transmembrane regions (helical) follow at residues 10–30, 40–60, 74–94, 108–128, 129–149, 163–183, 203–223, 237–257, 272–292, 299–319, 327–347, 370–390, and 404–424; these read LALPEIWLLAATCGVLVVDLF, FYLTQGALLVTAVLALSTQWG, SLGAVVKASVALLSVLALAYT, FYLLALFANLGMLVIASGGSL, LSLYLGLELLSLALYALVAYH, FVLGSLASGILLYGMSMVYGA, LMLLFGVVFMLVGVAFKLGAA, PTPVTLFLSTAPKVAAVALFM, EPMLMILAVASLLVGNLIAIV, MLAYSAIAHAGFIMVGFTAGT, LFYTIAYSIMAAGAFGMITVL, YAGVLLLVLVSMTGIPGTVGF, and GHIPLAIFAVVAAVVGAFYYL.

This sequence belongs to the complex I subunit 2 family. NDH-1 is composed of 14 different subunits. Subunits NuoA, H, J, K, L, M, N constitute the membrane sector of the complex.

The protein localises to the cell inner membrane. The catalysed reaction is a quinone + NADH + 5 H(+)(in) = a quinol + NAD(+) + 4 H(+)(out). NDH-1 shuttles electrons from NADH, via FMN and iron-sulfur (Fe-S) centers, to quinones in the respiratory chain. The immediate electron acceptor for the enzyme in this species is believed to be ubiquinone. Couples the redox reaction to proton translocation (for every two electrons transferred, four hydrogen ions are translocated across the cytoplasmic membrane), and thus conserves the redox energy in a proton gradient. The polypeptide is NADH-quinone oxidoreductase subunit N (Halorhodospira halophila (strain DSM 244 / SL1) (Ectothiorhodospira halophila (strain DSM 244 / SL1))).